Consider the following 634-residue polypeptide: MSPVSAIPLAYKLCLPRSLISSSRELNPLHITIPNLGMCRRGKSMAPASMSMILTAAVSDDDRVQRRRGNYHSNLWDDDFIQSLSTPYGEPSYRESAERLKGEIKKMFRSMSKEDEELITPLNDLIQRLWMVDSVERLGIDRHFKNEIKSALDYVYSYWNEKGIGCGRDSVVADLNSTALGFRTLRLHGYNVSSEVLKVFEDQNGQFACSPSKTEGEIRSALNLYRASLIAFPGEKVMEDAEIFSSRYLKEAVQKIPDCSLSQEIAYALEYGWHTNMPRLEARNYMDVFGHPSSPWLKKNKTQYMDGEKLLELAKLEFNIFHSLQQEELQYISRWWKDSGLPKLAFSRHRHVEYYTLGSCIATDPKHRAFRLGFVKTCHLNTVLDDIYDTFGTMDEIELFTEAVRRWDPSETESLPDYMKGVYMVLYEALTEMAQEAEKTQGRDTLNYARKAWEIYLDSYIQEAKWIASGYLPTFQEYFENGKISSAYRAAALTPILTLDVPLPEYILKGIDFPSRFNDLASSFLRLRGDTRCYKADRARGEEASCISCYMKDNPGSTEEDALNHINSMINEIIKELNWELLRPDSNIPMPARKHAFDITRALHHLYKYRDGFSVATKETKSLVSRMVLEPVTL.

A chloroplast-targeting transit peptide spans 1–21; the sequence is MSPVSAIPLAYKLCLPRSLIS. (2E)-geranyl diphosphate contacts are provided by R348, D385, D389, R526, and G529. The Mg(2+) site is built by D385 and D389. A DDXXD motif motif is present at residues 385 to 389; it reads DDIYD. Positions 529 and 537 each coordinate Mg(2+).

The protein belongs to the terpene synthase family. Tpsb subfamily. Monomer. It depends on Mg(2+) as a cofactor. The cofactor is Mn(2+).

It is found in the plastid. It localises to the chloroplast. It carries out the reaction (2E)-geranyl diphosphate = (4S)-limonene + diphosphate. The protein operates within secondary metabolite biosynthesis; terpenoid biosynthesis. It participates in terpene metabolism; oleoresin biosynthesis. Functionally, monoterpene synthase (mono-TPS) involved in the biosynthesis of monoterpene natural products. Catalyzes the conversion of (2E)-geranyl diphosphate (GPP) into (-)-limonene. Not able to use geranylgeranyl pyrophosphate (GGPP) and farnesyl pyrophosphate (FPP) as substrates. The protein is (-)-limonene synthase, chloroplastic of Picea sitchensis (Sitka spruce).